Here is a 438-residue protein sequence, read N- to C-terminus: 23S rRNA (uracil(1939)-C(5))-methyltransferase RlmD (438 aa).

The 60-residue stretch at lysine 10–lysine 69 folds into the TRAM domain. [4Fe-4S] cluster contacts are provided by cysteine 82, cysteine 88, cysteine 91, and cysteine 169. S-adenosyl-L-methionine is bound by residues glutamine 272, phenylalanine 301, asparagine 306, glutamate 322, asparagine 349, and aspartate 370. The Nucleophile role is filled by cysteine 396.

This sequence belongs to the class I-like SAM-binding methyltransferase superfamily. RNA M5U methyltransferase family. RlmD subfamily.

The enzyme catalyses uridine(1939) in 23S rRNA + S-adenosyl-L-methionine = 5-methyluridine(1939) in 23S rRNA + S-adenosyl-L-homocysteine + H(+). Catalyzes the formation of 5-methyl-uridine at position 1939 (m5U1939) in 23S rRNA. The sequence is that of 23S rRNA (uracil(1939)-C(5))-methyltransferase RlmD from Aliivibrio fischeri (strain MJ11) (Vibrio fischeri).